The chain runs to 158 residues: Protein Smg homolog (158 aa).

This sequence belongs to the Smg family.

This is Protein Smg homolog from Coxiella burnetii (strain Dugway 5J108-111).